The chain runs to 154 residues: Probable chemoreceptor glutamine deamidase CheD (154 aa).

The protein belongs to the CheD family.

It carries out the reaction L-glutaminyl-[protein] + H2O = L-glutamyl-[protein] + NH4(+). Probably deamidates glutamine residues to glutamate on methyl-accepting chemotaxis receptors (MCPs), playing an important role in chemotaxis. This Methanococcus vannielii (strain ATCC 35089 / DSM 1224 / JCM 13029 / OCM 148 / SB) protein is Probable chemoreceptor glutamine deamidase CheD.